The primary structure comprises 321 residues: Peptidase 1 (321 aa).

The N-terminal stretch at 1 to 18 (MKFVLAIASLLVLSTVYA) is a signal peptide. A propeptide spans 19-98 (RPASIKTFEE…LKTQFDLNAE (80 aa)) (activation peptide). 3 disulfide bridges follow: Cys-102/Cys-216, Cys-130/Cys-170, and Cys-164/Cys-202. The active site involves Cys-133. An N-linked (GlcNAc...) asparagine glycan is attached at Asn-151. Active-site residues include His-269 and Arg-288.

Belongs to the peptidase C1 family. Monomer.

The protein localises to the secreted. It catalyses the reaction Broad endopeptidase specificity.. Its function is as follows. Thiol protease that hydrolyzes proteins, with a preference for Phe or basic residues. This chain is Peptidase 1 (DERF1), found in Dermatophagoides farinae (American house dust mite).